Here is a 197-residue protein sequence, read N- to C-terminus: 7-methyl-GTP pyrophosphatase (197 aa).

Asp79 functions as the Proton acceptor in the catalytic mechanism.

It belongs to the Maf family. YceF subfamily.

Its subcellular location is the cytoplasm. The catalysed reaction is N(7)-methyl-GTP + H2O = N(7)-methyl-GMP + diphosphate + H(+). Functionally, nucleoside triphosphate pyrophosphatase that hydrolyzes 7-methyl-GTP (m(7)GTP). May have a dual role in cell division arrest and in preventing the incorporation of modified nucleotides into cellular nucleic acids. The chain is 7-methyl-GTP pyrophosphatase from Dictyostelium discoideum (Social amoeba).